The primary structure comprises 1397 residues: DNA-directed RNA polymerase subunit beta' (1397 aa).

Zn(2+)-binding residues include C71, C73, C86, and C89. The Mg(2+) site is built by D462, D464, and D466. Positions 811, 885, 892, and 895 each coordinate Zn(2+). Residues 1368–1397 form a disordered region; it reads QNRDDKILEDQGGATPTASTEIKEPAEGAA. A compositionally biased stretch (basic and acidic residues) spans 1388-1397; the sequence is EIKEPAEGAA.

Belongs to the RNA polymerase beta' chain family. In terms of assembly, the RNAP catalytic core consists of 2 alpha, 1 beta, 1 beta' and 1 omega subunit. When a sigma factor is associated with the core the holoenzyme is formed, which can initiate transcription. It depends on Mg(2+) as a cofactor. Zn(2+) is required as a cofactor.

The enzyme catalyses RNA(n) + a ribonucleoside 5'-triphosphate = RNA(n+1) + diphosphate. In terms of biological role, DNA-dependent RNA polymerase catalyzes the transcription of DNA into RNA using the four ribonucleoside triphosphates as substrates. The chain is DNA-directed RNA polymerase subunit beta' from Parvibaculum lavamentivorans (strain DS-1 / DSM 13023 / NCIMB 13966).